A 612-amino-acid chain; its full sequence is Elongation factor 4 (612 aa).

Residues 12 to 194 (SRIRNFSIIA…QIVEKVPAPS (183 aa)) form the tr-type G domain. Residues 24–29 (DHGKST) and 141–144 (NKID) contribute to the GTP site.

It belongs to the TRAFAC class translation factor GTPase superfamily. Classic translation factor GTPase family. LepA subfamily.

The protein resides in the cell membrane. The catalysed reaction is GTP + H2O = GDP + phosphate + H(+). Its function is as follows. Required for accurate and efficient protein synthesis under certain stress conditions. May act as a fidelity factor of the translation reaction, by catalyzing a one-codon backward translocation of tRNAs on improperly translocated ribosomes. Back-translocation proceeds from a post-translocation (POST) complex to a pre-translocation (PRE) complex, thus giving elongation factor G a second chance to translocate the tRNAs correctly. Binds to ribosomes in a GTP-dependent manner. This chain is Elongation factor 4, found in Bacillus licheniformis (strain ATCC 14580 / DSM 13 / JCM 2505 / CCUG 7422 / NBRC 12200 / NCIMB 9375 / NCTC 10341 / NRRL NRS-1264 / Gibson 46).